A 313-amino-acid chain; its full sequence is Porphobilinogen deaminase (313 aa).

S-(dipyrrolylmethanemethyl)cysteine is present on Cys-242.

The protein belongs to the HMBS family. Monomer. Requires dipyrromethane as cofactor.

The enzyme catalyses 4 porphobilinogen + H2O = hydroxymethylbilane + 4 NH4(+). Its pathway is porphyrin-containing compound metabolism; protoporphyrin-IX biosynthesis; coproporphyrinogen-III from 5-aminolevulinate: step 2/4. Functionally, tetrapolymerization of the monopyrrole PBG into the hydroxymethylbilane pre-uroporphyrinogen in several discrete steps. This is Porphobilinogen deaminase from Pseudomonas syringae pv. syringae (strain B728a).